Reading from the N-terminus, the 275-residue chain is NH(3)-dependent NAD(+) synthetase (275 aa).

Residue 50 to 57 (GISGGVDS) coordinates ATP. Position 56 (Asp-56) interacts with Mg(2+). Arg-147 is a deamido-NAD(+) binding site. Residue Thr-167 participates in ATP binding. Position 172 (Glu-172) interacts with Mg(2+). Deamido-NAD(+) is bound by residues Lys-180 and Asp-187. Positions 196 and 218 each coordinate ATP. Deamido-NAD(+) is bound at residue 267–268 (HK).

Belongs to the NAD synthetase family. As to quaternary structure, homodimer.

It catalyses the reaction deamido-NAD(+) + NH4(+) + ATP = AMP + diphosphate + NAD(+) + H(+). Its pathway is cofactor biosynthesis; NAD(+) biosynthesis; NAD(+) from deamido-NAD(+) (ammonia route): step 1/1. Functionally, catalyzes the ATP-dependent amidation of deamido-NAD to form NAD. Uses ammonia as a nitrogen source. The protein is NH(3)-dependent NAD(+) synthetase of Stutzerimonas stutzeri (strain A1501) (Pseudomonas stutzeri).